Here is a 317-residue protein sequence, read N- to C-terminus: Probable deoxyhypusine synthase (317 aa).

The active-site Nucleophile is the Lys285.

This sequence belongs to the deoxyhypusine synthase family. NAD(+) is required as a cofactor.

The catalysed reaction is [eIF5A protein]-L-lysine + spermidine = [eIF5A protein]-deoxyhypusine + propane-1,3-diamine. Its pathway is protein modification; eIF5A hypusination. In terms of biological role, catalyzes the NAD-dependent oxidative cleavage of spermidine and the subsequent transfer of the butylamine moiety of spermidine to the epsilon-amino group of a specific lysine residue of the eIF-5A precursor protein to form the intermediate deoxyhypusine residue. This chain is Probable deoxyhypusine synthase (dys), found in Methanosarcina thermophila.